The primary structure comprises 531 residues: MEPPSEPEPEPQPLAEASAAAPLRAPEVARLREEQEKVVTNCQEKIQHWEKVDNDYSALQERLRTLPDKLSYDVMVPFGPLAFMPGKLVHTNEVTVLLGDNWFAKCSAKQAVGLVEHRKEHVRKTIDDFKKVLKNFESRVEFTEDLQKMSDAAGDFVDIREEIKSDFEFKGKQRIAHKPHSKPKTSDIFEADFENGVKPKNTFDADELWARLEELERQEELLGELESKPDTVIANGEDRVSSEEEKEGADTGVNVVSPVTDSSAASSCKRRAGNAGLPNGQVNSLNYSVNGSNSYHSNKDDDEEEEDDDDDDDEDDDNESDHAISADNSIPTIYFSHTVEPKRVRINTGKNTTLKFSEKKEEAKRKRKSGAGSHATHELPAIKSPADIYRVFVDVVNGEYVPRKSILKSRSRENSVCSDTSESSAADVEDRRGLLRSTSSEEAVATEAGGSSLDELQENHPKKPLPSGVSEAFSGTVIEKEFLSPSLAPYSAIAHHALPTIPERKEVPSEVSEEPTKRVSKFRAARLQQRS.

At M1 the chain carries N-acetylmethionine. Disordered regions lie at residues 1–24 (MEPPSEPEPEPQPLAEASAAAPLR), 224–381 (ELES…ELPA), 408–470 (KSRS…SGVS), and 500–531 (TIPERKEVPSEVSEEPTKRVSKFRAARLQQRS). The span at 13–24 (PLAEASAAAPLR) shows a compositional bias: low complexity. Composition is skewed to polar residues over residues 257-266 (SPVTDSSAAS) and 280-296 (GQVNSLNYSVNGSNSYH). Positions 300–319 (DDDEEEEDDDDDDDEDDDNE) are enriched in acidic residues. S369 carries the post-translational modification Phosphoserine; by RPS6KB1. Polar residues predominate over residues 414 to 424 (NSVCSDTSESS). S439 is subject to Phosphoserine.

The protein belongs to the RNA polymerase II subunit 5-mediating protein family. Homodimer. Component of the PAQosome complex which is responsible for the biogenesis of several protein complexes and which consists of R2TP complex members RUVBL1, RUVBL2, RPAP3 and PIH1D1, URI complex members PFDN2, PFDN6, PDRG1, UXT and URI1 as well as ASDURF, POLR2E and DNAAF10/WDR92. Interacts with POLR2E/RPB5, RUVBL2 and RUVBL1. Interacts with PFDN2, PFDN4 and STAP1; the interactions are phosphorylation-dependent and occur in a growth-dependent manner in the mitochondrion. Interacts with UXT. Interacts with PPP1CC; the interaction is phosphorylation-dependent and occurs in a growth factor-dependent manner. Interacts (via the middle C-terminal region) with GTF2F1 and GTF2F2. Interacts with DMAP1. Interacts with TSC1 and TSC2. Interacts with PRPF8 and EFTUD2 in a ZNHIT2-dependent manner. Phosphorylation occurs in response to androgen treatment in prostate cancer cells in a mTOR-dependent manner. Phosphorylated; hyperhosphorylated in mitochondria in a mTORC-dependent signaling pathway. Phosphorylated at Ser-369 by RPS6KB1 in a growth factor- and rapamycin-dependent manner. S6K1-mediated mitochondrial phosphorylation at Ser-369 disrupts the URI1-PPP1CC complex in the mitochondrion, relieves PPP1CC phosphatase inhibition activity and hence engages a negative feedback diminishing RPS6KB1 kinase activity, preventing sustained S6K1-dependent signaling. Phosphorylated. Phosphorylation occurs essentially on serine residues. In terms of tissue distribution, expressed in the spinal cord, ganglia, choroid plexus and olfactors epithelium of the developing brain. Expressed in skin, lung, kidney, testis and muscles (at protein level). Expressed strongly in brain and kidney. Expressed weakly in skeletal muscle, lung and liver.

The protein resides in the nucleus. The protein localises to the cytoplasm. It is found in the mitochondrion. It localises to the cell projection. Its subcellular location is the dendrite. In terms of biological role, involved in gene transcription regulation. Acts as a transcriptional repressor in concert with the corepressor UXT to regulate androgen receptor (AR) transcription. May act as a tumor suppressor to repress AR-mediated gene transcription and to inhibit anchorage-independent growth in prostate cancer cells. Required for cell survival in ovarian cancer cells. Together with UXT, associates with chromatin to the NKX3-1 promoter region. Its function is as follows. Plays a central role in maintaining S6K1 signaling and BAD phosphorylation under normal growth conditions thereby protecting cells from potential deleterious effects of sustained S6K1 signaling. The URI1-PPP1CC complex acts as a central component of a negative feedback mechanism that counteracts excessive S6K1 survival signaling to BAD in response to growth factors. Mediates inhibition of PPP1CC phosphatase activity in mitochondria. Coordinates the regulation of nutrient-sensitive gene expression availability in a mTOR-dependent manner. Seems to be a scaffolding protein able to assemble a prefoldin-like complex that contains PFDs and proteins with roles in transcription and ubiquitination. This Mus musculus (Mouse) protein is Unconventional prefoldin RPB5 interactor (Uri1).